The chain runs to 73 residues: Large ribosomal subunit protein bL31 (73 aa).

Residues cysteine 16, cysteine 18, cysteine 36, and cysteine 39 each coordinate Zn(2+).

The protein belongs to the bacterial ribosomal protein bL31 family. Type A subfamily. As to quaternary structure, part of the 50S ribosomal subunit. Zn(2+) is required as a cofactor.

In terms of biological role, binds the 23S rRNA. The sequence is that of Large ribosomal subunit protein bL31 from Desulfotalea psychrophila (strain LSv54 / DSM 12343).